Reading from the N-terminus, the 207-residue chain is D-aminoacyl-tRNA deacylase 1 (207 aa).

Residues 139–140 (GP) carry the Gly-cisPro motif, important for rejection of L-amino acids motif. Positions 142–207 (TIQLESPPAP…EGDVSSEREP (66 aa)) are disordered. 2 stretches are compositionally biased toward basic and acidic residues: residues 156–167 (LLSKQEKQQQRK) and 178–189 (SSREKAAQRSKV).

This sequence belongs to the DTD family. As to quaternary structure, homodimer.

It is found in the cytoplasm. The catalysed reaction is a D-aminoacyl-tRNA + H2O = a tRNA + a D-alpha-amino acid + H(+). It carries out the reaction glycyl-tRNA(Ala) + H2O = tRNA(Ala) + glycine + H(+). Its function is as follows. D-aminoacyl-tRNA deacylase, with no observable activity on tRNAs charged with their cognate L-amino acid. Hydrolyzes correctly charged, achiral, glycyl-tRNA(Gly). Deacylates mischarged D.melanogaster and E.coli glycyl-tRNA(Ala), protecting cells against glycine mischarging by AlaRS. Acts via tRNA-based rather than protein-based catalysis; rejects L-amino acids rather than detecting D-amino acids in the active site. By recycling D-aminoacyl-tRNA to D-amino acids and free tRNA molecules, this enzyme counteracts the toxicity associated with the formation of D-aminoacyl-tRNA entities in vivo and helps enforce protein L-homochirality. The chain is D-aminoacyl-tRNA deacylase 1 from Danio rerio (Zebrafish).